Here is a 49-residue protein sequence, read N- to C-terminus: Fungus-induced-related protein 16 (49 aa).

The polypeptide is Fungus-induced-related protein 16 (fipr-16) (Caenorhabditis elegans).